A 220-amino-acid chain; its full sequence is Protein GrpE (220 aa).

This sequence belongs to the GrpE family. As to quaternary structure, homodimer.

Its subcellular location is the cytoplasm. Participates actively in the response to hyperosmotic and heat shock by preventing the aggregation of stress-denatured proteins, in association with DnaK and GrpE. It is the nucleotide exchange factor for DnaK and may function as a thermosensor. Unfolded proteins bind initially to DnaJ; upon interaction with the DnaJ-bound protein, DnaK hydrolyzes its bound ATP, resulting in the formation of a stable complex. GrpE releases ADP from DnaK; ATP binding to DnaK triggers the release of the substrate protein, thus completing the reaction cycle. Several rounds of ATP-dependent interactions between DnaJ, DnaK and GrpE are required for fully efficient folding. In Bartonella quintana (strain Toulouse) (Rochalimaea quintana), this protein is Protein GrpE.